Here is a 269-residue protein sequence, read N- to C-terminus: RBPJ-interacting and tubulin-associated protein 1 (269 aa).

A Nuclear export signal motif is present at residues 5–17 (VELAVSGIQTLPL). 2 disordered regions span residues 37-101 (SLFG…NKYR) and 141-269 (FWTP…PPWK). The span at 62 to 77 (RTSGVGTGTSRASGAN) shows a compositional bias: polar residues. The span at 79–93 (SCETTSSSGSTPTLT) shows a compositional bias: low complexity. The Nuclear localization signal signature appears at 92–108 (LTPRKKNKYRLISHTPS). Positions 128 to 156 (WMAKGDAAKLHSLFWTPPATPRGSHSPRP) are interaction with RBPJ/RBPSUH. Residues 156–269 (PRETPLRAIH…ATQKPKPPWK (114 aa)) are interaction with tubulin.

This sequence belongs to the RITA family. Interacts with RBPJ/RBPSUH.

It is found in the cytoplasm. It localises to the nucleus. Its subcellular location is the cytoskeleton. The protein localises to the microtubule organizing center. The protein resides in the centrosome. Its function is as follows. Tubulin-binding protein that acts as a negative regulator of Notch signaling pathway. Shuttles between the cytoplasm and the nucleus and mediates the nuclear export of RBPJ/RBPSUH, thereby preventing the interaction between RBPJ/RBPSUH and NICD product of Notch proteins (Notch intracellular domain), leading to down-regulate Notch-mediated transcription. May play a role in neurogenesis. This Ailuropoda melanoleuca (Giant panda) protein is RBPJ-interacting and tubulin-associated protein 1 (RITA1).